Here is a 968-residue protein sequence, read N- to C-terminus: RNA polymerase-associated protein RapA (968 aa).

In terms of domain architecture, Helicase ATP-binding spans 164–334; sequence DVGRRHAPRV…FARLRLLDPN (171 aa). Residue 177–184 coordinates ATP; it reads DEVGLGKT. The DEAH box motif lies at 280-283; sequence DEAH. The Helicase C-terminal domain occupies 490 to 644; sequence RVEWLMGYLT…TCPTGRAIYD (155 aa).

Belongs to the SNF2/RAD54 helicase family. RapA subfamily. Interacts with the RNAP. Has a higher affinity for the core RNAP than for the holoenzyme. Its ATPase activity is stimulated by binding to RNAP.

Functionally, transcription regulator that activates transcription by stimulating RNA polymerase (RNAP) recycling in case of stress conditions such as supercoiled DNA or high salt concentrations. Probably acts by releasing the RNAP, when it is trapped or immobilized on tightly supercoiled DNA. Does not activate transcription on linear DNA. Probably not involved in DNA repair. In Salmonella arizonae (strain ATCC BAA-731 / CDC346-86 / RSK2980), this protein is RNA polymerase-associated protein RapA.